We begin with the raw amino-acid sequence, 270 residues long: 3-methyl-2-oxobutanoate hydroxymethyltransferase (270 aa).

Residues Asp-53 and Asp-92 each coordinate Mg(2+). 3-methyl-2-oxobutanoate is bound by residues 53–54 (DS), Asp-92, and Lys-120. Glu-122 contributes to the Mg(2+) binding site. Glu-189 functions as the Proton acceptor in the catalytic mechanism.

It belongs to the PanB family. In terms of assembly, homodecamer; pentamer of dimers. Requires Mg(2+) as cofactor.

It localises to the cytoplasm. The enzyme catalyses 3-methyl-2-oxobutanoate + (6R)-5,10-methylene-5,6,7,8-tetrahydrofolate + H2O = 2-dehydropantoate + (6S)-5,6,7,8-tetrahydrofolate. Its pathway is cofactor biosynthesis; (R)-pantothenate biosynthesis; (R)-pantoate from 3-methyl-2-oxobutanoate: step 1/2. Functionally, catalyzes the reversible reaction in which hydroxymethyl group from 5,10-methylenetetrahydrofolate is transferred onto alpha-ketoisovalerate to form ketopantoate. In Saccharophagus degradans (strain 2-40 / ATCC 43961 / DSM 17024), this protein is 3-methyl-2-oxobutanoate hydroxymethyltransferase.